We begin with the raw amino-acid sequence, 252 residues long: Probable transcriptional regulatory protein Cagg_2594 (252 aa).

Residues 1–14 (MSGHSKWHTIRRAK) show a composition bias toward basic residues. Residues 1–22 (MSGHSKWHTIRRAKSANDQRRG) form a disordered region.

This sequence belongs to the TACO1 family.

It localises to the cytoplasm. The sequence is that of Probable transcriptional regulatory protein Cagg_2594 from Chloroflexus aggregans (strain MD-66 / DSM 9485).